The sequence spans 252 residues: uncharacterized protein (252 aa).

The signal sequence occupies residues Met1 to Ser20.

Belongs to the ascovirus HvAV ORF17 family.

This is an uncharacterized protein from Spodoptera frugiperda ascovirus 1a (SfAV-1a).